The sequence spans 255 residues: MSNRLKNEVIAITGGGAGIGLAIASAALREGAKVALIDLDQGLAERSAAMLSTGGAVAKGFGADVTKAADITAAITSAEQTIGSLTGLVNNAGIAGFGSVHDADAAAWDRIMAVNVTGTFLASKAALAGMLERHKGTIVNFGSVAGLVGIPTMAAYCAAKGAIVNLTRQMAADYSGRGVRVNAVCPGTVTSTGMGQQLLGSDTSPEVQARRLAKYPIGRFGTPEDIAEAVIFLLSDQAAFVTGAAFAVDGGMTAI.

Residues Ile-19, Asp-38, 64–65, and Asn-91 each bind NAD(+); that span reads DV. Residues Ser-143 and Tyr-156 each coordinate (S)-2-hydroxypropyl-coenzyme M. The Proton acceptor role is filled by Tyr-156. Lys-160 contributes to the NAD(+) binding site. A (S)-2-hydroxypropyl-coenzyme M-binding site is contributed by Thr-188. 189–193 serves as a coordination point for NAD(+); sequence VTSTG. Tyr-215 lines the (S)-2-hydroxypropyl-coenzyme M pocket.

This sequence belongs to the short-chain dehydrogenases/reductases (SDR) family. In terms of assembly, homotetramer.

It catalyses the reaction (S)-2-hydroxypropyl-coenzyme M + NAD(+) = 2-oxopropyl-coenzyme M + NADH + H(+). Its activity is regulated as follows. Not inhibited by 2-(2-methyl-2-hydroxypropylthio)ethanesulfonate (M-HPC), an achiral analog of both R-HPC and S-HPC. In terms of biological role, involved in aliphatic epoxide carboxylation. Catalyzes the reversible oxidation of (2S)-2-hydroxypropyl-coenzyme M (S-HPC) to 2-oxopropyl-coenzyme M (2-KPC). The enzyme is highly specific for the S enantiomers. In vitro can also use the aliphatic ketone 2-butanone and the aliphatic alcohol 2-propanol, and shows an inherent stereoselectivity for 2-butanone reduction. In Xanthobacter autotrophicus (strain ATCC BAA-1158 / Py2), this protein is 2-(S)-hydroxypropyl-CoM dehydrogenase 3.